Here is a 524-residue protein sequence, read N- to C-terminus: Probable endopeptidase p60 (524 aa).

A signal peptide spans Met1 to Ala27. A LysM 1 domain is found at Ser28–Val71. The region spanning Lys78 to Val142 is the SH3b domain. The interval Gln150–Ala188 is disordered. A compositionally biased stretch (low complexity) spans Thr174 to Ala188. A LysM 2 domain is found at Thr196–Val239. The span at Asn272–Pro299 shows a compositional bias: low complexity. A disordered region spans residues Asn272–Ala313. Residues Ser314 to Val357 form the LysM 3 domain. The disordered stretch occupies residues Thr360–Ser408. Low complexity predominate over residues Pro362–Ser408. Residues Ser406–Val524 form the NlpC/P60 domain. Catalysis depends on Cys436, which acts as the Nucleophile. Residue His486 is the Proton acceptor of the active site. Asn498 is a catalytic residue.

The protein belongs to the peptidase C40 family.

Functionally, this major extracellular protein may be involved in the invasion of non-professional phagocytic cells by Listeria. The polypeptide is Probable endopeptidase p60 (iap) (Listeria welshimeri).